The sequence spans 88 residues: Small ribosomal subunit protein uS15c (88 aa).

Belongs to the universal ribosomal protein uS15 family. As to quaternary structure, part of the 30S ribosomal subunit.

The protein resides in the plastid. Its subcellular location is the chloroplast. The chain is Small ribosomal subunit protein uS15c (rps15) from Marchantia polymorpha (Common liverwort).